Consider the following 190-residue polypeptide: 7-methyl-GTP pyrophosphatase (190 aa).

Residue Asp69 is the Proton acceptor of the active site.

This sequence belongs to the Maf family. YceF subfamily. A divalent metal cation is required as a cofactor.

It is found in the cytoplasm. It carries out the reaction N(7)-methyl-GTP + H2O = N(7)-methyl-GMP + diphosphate + H(+). In terms of biological role, nucleoside triphosphate pyrophosphatase that hydrolyzes 7-methyl-GTP (m(7)GTP). May have a dual role in cell division arrest and in preventing the incorporation of modified nucleotides into cellular nucleic acids. In Xanthomonas axonopodis pv. citri (strain 306), this protein is 7-methyl-GTP pyrophosphatase.